Reading from the N-terminus, the 500-residue chain is L-arabinose isomerase (500 aa).

Mn(2+) contacts are provided by Glu306, Glu333, His349, and His448.

Belongs to the arabinose isomerase family. It depends on Mn(2+) as a cofactor.

It catalyses the reaction beta-L-arabinopyranose = L-ribulose. It functions in the pathway carbohydrate degradation; L-arabinose degradation via L-ribulose; D-xylulose 5-phosphate from L-arabinose (bacterial route): step 1/3. Functionally, catalyzes the conversion of L-arabinose to L-ribulose. This is L-arabinose isomerase from Shewanella sp. (strain MR-7).